A 511-amino-acid polypeptide reads, in one-letter code: Cytochrome P450 monooxygenase cypX (511 aa).

Residues 18–38 (LPFSLALVAAAFVLYNIVSII) traverse the membrane as a helical segment. Residues Asn162 and Asn407 are each glycosylated (N-linked (GlcNAc...) asparagine). A heme-binding site is contributed by Cys454.

This sequence belongs to the cytochrome P450 family. Heme is required as a cofactor.

The protein localises to the membrane. It participates in mycotoxin biosynthesis. Cytochrome P450 monooxygenase; part of the fragmented gene cluster that mediates the biosynthesis of dothistromin (DOTH), a polyketide toxin very similar in structure to the aflatoxin precursor, versicolorin B. The first step of the pathway is the conversion of acetate to norsolorinic acid (NOR) and requires the fatty acid synthase subunits hexA and hexB, as well as the polyketide synthase pksA. PksA combines a hexanoyl starter unit and 7 malonyl-CoA extender units to synthesize the precursor NOR. The hexanoyl starter unit is provided to the acyl-carrier protein (ACP) domain by the fungal fatty acid synthase hexA/hexB. The second step is the conversion of NOR to averantin (AVN) and requires the norsolorinic acid ketoreductase nor1, which catalyzes the dehydration of norsolorinic acid to form (1'S)-averantin. The cytochrome P450 monooxygenase avnA then catalyzes the hydroxylation of AVN to 5'hydroxyaverantin (HAVN). The next step is performed by adhA that transforms HAVN to averufin (AVF). Averufin might then be converted to hydroxyversicolorone by cypX and avfA. Hydroxyversicolorone is further converted versiconal hemiacetal acetate (VHA) by moxY. VHA is then the substrate for the versiconal hemiacetal acetate esterase est1 to yield versiconal (VAL). Versicolorin B synthase vbsA then converts VAL to versicolorin B (VERB) by closing the bisfuran ring. Then, the activity of the versicolorin B desaturase verB leads to versicolorin A (VERA). DotB, a predicted chloroperoxidase, may perform epoxidation of the A-ring of VERA. Alternatively, a cytochrome P450, such as cypX or avnA could catalyze this step. It is also possible that another, uncharacterized, cytochrome P450 enzyme is responsible for this step. Opening of the epoxide could potentially be achieved by the epoxide hydrolase epoA. However, epoA seems not to be required for DOTH biosynthesis, but other epoxide hydrolases may have the ability to complement this hydrolysis. Alternatively, opening of the epoxide ring could be achieved non-enzymatically. The next step is the deoxygenation of ring A to yield the 5,8-dihydroxyanthraquinone which is most likely catalyzed by the NADPH dehydrogenase encoded by ver1. The last stages of DOTH biosynthesis are proposed to involve hydroxylation of the bisfuran. OrdB and norB might have oxidative roles here. An alternative possibility is that cytochrome P450 monoogenases such as avnA and cypX might perform these steps in addition to previously proposed steps. The sequence is that of Cytochrome P450 monooxygenase cypX from Dothistroma septosporum (Red band needle blight fungus).